The sequence spans 1091 residues: ATP-dependent helicase/deoxyribonuclease subunit B (1091 aa).

The protein belongs to the helicase family. AddB/RexB type 2 subfamily. In terms of assembly, heterodimer of AddA and RexB. The cofactor is Mg(2+).

The heterodimer acts as both an ATP-dependent DNA helicase and an ATP-dependent, dual-direction single-stranded exonuclease. Recognizes the chi site generating a DNA molecule suitable for the initiation of homologous recombination. This subunit has 5' -&gt; 3' nuclease activity but not helicase activity. This Streptococcus pneumoniae (strain ATCC 700669 / Spain 23F-1) protein is ATP-dependent helicase/deoxyribonuclease subunit B.